The sequence spans 1141 residues: Isoleucine--tRNA ligase, cytoplasmic (1141 aa).

Residues 50–60 (PFATGLPHYGH) carry the 'HIGH' region motif. Residues 601-605 (KMSKS) carry the 'KMSKS' region motif. Residue lysine 604 coordinates ATP.

The protein belongs to the class-I aminoacyl-tRNA synthetase family.

Its subcellular location is the cytoplasm. It catalyses the reaction tRNA(Ile) + L-isoleucine + ATP = L-isoleucyl-tRNA(Ile) + AMP + diphosphate. The sequence is that of Isoleucine--tRNA ligase, cytoplasmic from Caenorhabditis elegans.